The primary structure comprises 509 residues: Coiled-coil domain-containing protein 181 (509 aa).

Residues 58-82 (VIEHTKQHSDPDKSLQDEVSPRKND) are compositionally biased toward basic and acidic residues. Disordered regions lie at residues 58–120 (VIEH…EEED), 241–332 (PINN…VTST), and 345–367 (QLEQKREKLKREEERRKIEEEKE). Composition is skewed to polar residues over residues 243-266 (NNANTTENDPQQLLPRSSNSSVSG) and 300-332 (TCPSSAVISDQSKGNGNSNHRAQSAHISPVTST). Residues 335-375 (LSPRQKELQKQLEQKREKLKREEERRKIEEEKEKKRENDIV) adopt a coiled-coil conformation.

This sequence belongs to the CCDC181 family. Homodimer. Interacts with HOOK1. Interacts with HOOK2. Interacts with HOOK3.

Its subcellular location is the cytoplasm. It is found in the cytoskeleton. The protein resides in the cell projection. It localises to the cilium. The protein localises to the flagellum. Functionally, microtubule-binding protein that localizes to the microtubular manchette of elongating spermatids. The protein is Coiled-coil domain-containing protein 181 of Pongo abelii (Sumatran orangutan).